The sequence spans 480 residues: Ribosomal RNA small subunit methyltransferase F (480 aa).

S-adenosyl-L-methionine-binding positions include 126–132 (AAAPGSK), glutamate 150, aspartate 177, and aspartate 195. Catalysis depends on cysteine 248, which acts as the Nucleophile.

The protein belongs to the class I-like SAM-binding methyltransferase superfamily. RsmB/NOP family.

It is found in the cytoplasm. The enzyme catalyses cytidine(1407) in 16S rRNA + S-adenosyl-L-methionine = 5-methylcytidine(1407) in 16S rRNA + S-adenosyl-L-homocysteine + H(+). Functionally, specifically methylates the cytosine at position 1407 (m5C1407) of 16S rRNA. This is Ribosomal RNA small subunit methyltransferase F from Cronobacter sakazakii (strain ATCC BAA-894) (Enterobacter sakazakii).